The primary structure comprises 252 residues: MVDPLCNYNVLEAIFSYLELNDLYRCSQVCKSWYHFLNDENSDVWRWHCLRKLPKESVKSDLLASVSTYKTKLRAYLHAWSPNDCSRNVYIKPNGFTLHRNPVAQSTDAARGKIGFRQGRHAWEVIWEGPLGTVAVIGISTKEAALQCHGYVALLGSDDQSWGWNLVENHLLHNGDMQGNYPLLNNAPKYQVGERIRVILDCDDNTLSFEKNYEFLGVAFRGLPDKKLYPTVSAVYGNTEVSMVYLGTPLDG.

Positions 1-48 (MVDPLCNYNVLEAIFSYLELNDLYRCSQVCKSWYHFLNDENSDVWRWH) constitute an F-box domain. Residues 58–250 (VKSDLLASVS…VSMVYLGTPL (193 aa)) form the B30.2/SPRY domain.

Belongs to the FBXO45/Fsn family. Component of an E3 ubiquitin ligase complex composed of hiw and Fsn.

It localises to the synapse. Its pathway is protein modification; protein ubiquitination. Functionally, required in the presynaptic motoneuron to down-regulate the levels of wnd and restrain synaptic terminal growth at the neuromuscular junction (NMJ). This Drosophila virilis (Fruit fly) protein is F-box/SPRY domain-containing protein 1.